The following is a 325-amino-acid chain: Tagatose 1,6-diphosphate aldolase 1 (325 aa).

It belongs to the aldolase LacD family.

The enzyme catalyses D-tagatofuranose 1,6-bisphosphate = D-glyceraldehyde 3-phosphate + dihydroxyacetone phosphate. It functions in the pathway carbohydrate metabolism; D-tagatose 6-phosphate degradation; D-glyceraldehyde 3-phosphate and glycerone phosphate from D-tagatose 6-phosphate: step 2/2. The chain is Tagatose 1,6-diphosphate aldolase 1 (lacD1) from Streptococcus pyogenes serotype M3 (strain SSI-1).